Reading from the N-terminus, the 675-residue chain is Secretogranin-1 (675 aa).

The N-terminal stretch at 1 to 20 (MQRAMLLGLLGAAALAAVIS) is a signal peptide. Cys-36 and Cys-57 are disulfide-bonded. The span at 64-90 (SGKEVKGEEKGENENSKFEVRLLRDPS) shows a compositional bias: basic and acidic residues. Disordered stretches follow at residues 64 to 507 (SGKE…YPTT) and 528 to 555 (NSDF…VTMT). Ser-93, Ser-99, Ser-100, Ser-129, and Ser-147 each carry phosphoserine. Residue Ser-93 is glycosylated (O-linked (Xyl...) (chondroitin sulfate) serine). Basic and acidic residues-rich tracts occupy residues 148–161 (KEAK…RGGK) and 168–248 (GKIY…KPQE). A Phosphoserine modification is found at Ser-190. The O-linked (Xyl...) (chondroitin sulfate) serine glycan is linked to Ser-236. Over residues 250 to 269 (PDQDQSEEESEEGEEGEEGA) the composition is skewed to acidic residues. A phosphoserine mark is found at Ser-255, Ser-259, Ser-291, Ser-309, and Ser-333. The span at 292 to 311 (YEGRRPLSEERKHAAGESKD) shows a compositional bias: basic and acidic residues. Tyr-339 is modified (sulfotyrosine). Basic and acidic residues-rich tracts occupy residues 361–410 (GSEE…EGAK) and 429–452 (SRQE…DTAK). Phosphoserine occurs at positions 362, 372, 375, and 397. Position 469 is a sulfotyrosine (Tyr-469). Residues Ser-490, Ser-529, and Ser-540 each carry the phosphoserine modification. Residue Tyr-563 is modified to Sulfotyrosine. The interval 620–646 (DFYDSEEQMGPHQEAEDEKDRADQRVL) is disordered. Tyr-622 is subject to Sulfotyrosine; partial. Residue Ser-624 is modified to Phosphoserine. Over residues 637–646 (EKDRADQRVL) the composition is skewed to basic and acidic residues. An Arginine amide; in CCB peptide short form modification is found at Arg-674.

It belongs to the chromogranin/secretogranin protein family. Interacts with ITPR1 in the secretory granules. Post-translationally, extensively processed in glucagonoma tissue by limited proteolysis at conserved basic residues. Alternative processing are seen in different tissues. The proglucagon-converting enzymes present in transformed alpha-cells are likely candidates to be involved in tissue-specific processing. In terms of tissue distribution, expressed in the brain, adrenal medulla and anterior pituitary. In the brain, localized to the hippocampal formation, the endocrine hypothalamus, the olfactory system, and in anatomically distinct structures in the pons-medulla.

The protein resides in the secreted. Its function is as follows. Secretogranin-1 is a neuroendocrine secretory granule protein, which may be the precursor for other biologically active peptides. The sequence is that of Secretogranin-1 (Chgb) from Rattus norvegicus (Rat).